The following is a 407-amino-acid chain: Zinc finger protein 260 (407 aa).

3 disordered regions span residues 1–21, 39–72, and 96–124; these read MLESLQPESHLLHDEPDPGES, VEHKKTHSGEKSPECTGCGEESSQASSLTLHLRS, and SHQKQHTEERPSESKKTPVPMTTTVRNQR. The C2H2-type 1 zinc-finger motif lies at 23-45; it reads YECNECKETFSLEQNFVEHKKTH. 2 stretches are compositionally biased toward basic and acidic residues: residues 39–51 and 100–111; these read VEHKKTHSGEKSP and QHTEERPSESKK. The segment at 51–73 adopts a C2H2-type 2; degenerate zinc-finger fold; that stretch reads PECTGCGEESSQASSLTLHLRSR. The C2H2-type 3 zinc finger occupies 79–101; it reads YKCGECGKAFSQRGNFLSHQKQH. Residues 115 to 124 are compositionally biased toward polar residues; sequence PMTTTVRNQR. C2H2-type zinc fingers lie at residues 131-153, 159-181, 187-209, 215-237, 243-265, 271-293, 299-321, 327-349, 355-377, and 383-405; these read YACKECGKAFNGKSYLKEHEKIH, FECSQCGRAFSQKQYLIKHQNIH, FKCNECGKAFSQKENLIIHQRIH, YECKGCGKAFIQKSSLIRHQRSH, YTCKECGKAFSGKSNLTEHEKIH, YKCNECGTIFRQKQYLIKHHNIH, YECNKCGKAFSRITSLIVHVRIH, YECKICGKAFCQSSSLTVHMRSH, YGCNECGKAFSQFSTLALHMRIH, and YQCSECGKAFSQKSHHIRHQRIH.

The protein belongs to the krueppel C2H2-type zinc-finger protein family. Binds DNA. Interacts with GATA4. In terms of tissue distribution, predominantly present in heart. Outside the heart, it is detected in embryonic and postnatal vascular smooth muscle cells and in epithelial cells of the lung, gut and kidney at sites of epithelial morphogenesis and in the spinal cord (at protein level).

It is found in the nucleus. Functionally, transcription factor that acts as a cardiac regulator and an effector of alpha1-adrenergic signaling. Binds to PE response elements (PERE) present in the promoter of genes such as ANF/NPPA and acts as a direct transcriptional activator of NPPA. Also acts as a cofactor with GATA4, a key cardiac regulator. The sequence is that of Zinc finger protein 260 (Znf260) from Mus musculus (Mouse).